Here is a 452-residue protein sequence, read N- to C-terminus: Pup--protein ligase (452 aa).

E9 contributes to the Mg(2+) binding site. ATP is bound at residue R53. Y55 contacts Mg(2+). The Proton acceptor role is filled by D57. Residue E63 participates in Mg(2+) binding. The ATP site is built by T66 and W419.

This sequence belongs to the Pup ligase/Pup deamidase family. Pup-conjugating enzyme subfamily.

The catalysed reaction is ATP + [prokaryotic ubiquitin-like protein]-L-glutamate + [protein]-L-lysine = ADP + phosphate + N(6)-([prokaryotic ubiquitin-like protein]-gamma-L-glutamyl)-[protein]-L-lysine.. Its pathway is protein degradation; proteasomal Pup-dependent pathway. It participates in protein modification; protein pupylation. Its function is as follows. Catalyzes the covalent attachment of the prokaryotic ubiquitin-like protein modifier Pup to the proteasomal substrate proteins, thereby targeting them for proteasomal degradation. This tagging system is termed pupylation. The ligation reaction involves the side-chain carboxylate of the C-terminal glutamate of Pup and the side-chain amino group of a substrate lysine. In Mycobacterium avium (strain 104), this protein is Pup--protein ligase.